Reading from the N-terminus, the 837-residue chain is Protein translocase subunit SecA (837 aa).

ATP-binding positions include Q85, 103-107 (GEGKT), and D493. Residues C821, C823, C832, and H833 each contribute to the Zn(2+) site.

The protein belongs to the SecA family. In terms of assembly, monomer and homodimer. Part of the essential Sec protein translocation apparatus which comprises SecA, SecYEG and auxiliary proteins SecDF. Other proteins may also be involved. Zn(2+) is required as a cofactor.

Its subcellular location is the cell membrane. The protein resides in the cytoplasm. The enzyme catalyses ATP + H2O + cellular proteinSide 1 = ADP + phosphate + cellular proteinSide 2.. Part of the Sec protein translocase complex. Interacts with the SecYEG preprotein conducting channel. Has a central role in coupling the hydrolysis of ATP to the transfer of proteins into and across the cell membrane, serving as an ATP-driven molecular motor driving the stepwise translocation of polypeptide chains across the membrane. In Streptococcus pneumoniae serotype 2 (strain D39 / NCTC 7466), this protein is Protein translocase subunit SecA.